The sequence spans 2021 residues: U3 small nucleolar RNA-associated protein 10 (2021 aa).

HEAT repeat units follow at residues 837 to 875 (PVDFQVVLPQILIALQDSDKDVRRVAVDVLRSVEGGEGM), 976 to 1014 (TSILRSAIPLLASLFDDKSEESLWLSSLPDGQQALYVQA), 1281 to 1319 (EKTVSRIVPVMTQSLKEKAQNSLELYTKSLTFLSIFTDM), 1935 to 1973 (ENVLRRLNTAVCLATRSDDPKVRLAALDALSAIWDAQAE), and 1977 to 2015 (GLVPETVSEFLAELLEDESKDVEIAARGVLAKIEKVTGS).

The protein belongs to the HEATR1/UTP10 family. In terms of assembly, component of the ribosomal small subunit (SSU) processome.

Its subcellular location is the nucleus. The protein resides in the nucleolus. Involved in nucleolar processing of pre-18S ribosomal RNA. Involved in ribosome biosynthesis. The sequence is that of U3 small nucleolar RNA-associated protein 10 (UTP10) from Cryptococcus neoformans var. neoformans serotype D (strain JEC21 / ATCC MYA-565) (Filobasidiella neoformans).